The sequence spans 73 residues: Putative defensin-like protein 270 (73 aa).

The N-terminal stretch at M1–S23 is a signal peptide. 4 disulfides stabilise this stretch: C33-C72, C39-C60, C45-C70, and C49-C71.

The protein belongs to the DEFL family.

The protein resides in the secreted. This Arabidopsis thaliana (Mouse-ear cress) protein is Putative defensin-like protein 270.